A 307-amino-acid chain; its full sequence is Small ribosomal subunit biogenesis GTPase RsgA (307 aa).

Residues 80-237 (KADLRQTIVS…IVDTPGIKEF (158 aa)) enclose the CP-type G domain. Residues 129-132 (NKID) and 180-188 (GQSGVGKSS) contribute to the GTP site. Zn(2+) is bound by residues cysteine 261, cysteine 266, histidine 268, and cysteine 274.

Belongs to the TRAFAC class YlqF/YawG GTPase family. RsgA subfamily. In terms of assembly, monomer. Associates with 30S ribosomal subunit, binds 16S rRNA. Requires Zn(2+) as cofactor.

It is found in the cytoplasm. One of several proteins that assist in the late maturation steps of the functional core of the 30S ribosomal subunit. Helps release RbfA from mature subunits. May play a role in the assembly of ribosomal proteins into the subunit. Circularly permuted GTPase that catalyzes slow GTP hydrolysis, GTPase activity is stimulated by the 30S ribosomal subunit. The sequence is that of Small ribosomal subunit biogenesis GTPase RsgA from Borreliella afzelii (strain PKo) (Borrelia afzelii).